Consider the following 159-residue polypeptide: 2-C-methyl-D-erythritol 2,4-cyclodiphosphate synthase (159 aa).

Residues Asp8 and His10 each coordinate a divalent metal cation. Residues 8–10 and 34–35 contribute to the 4-CDP-2-C-methyl-D-erythritol 2-phosphate site; these read DVH and HS. His42 is an a divalent metal cation binding site. 4-CDP-2-C-methyl-D-erythritol 2-phosphate contacts are provided by residues 56–58, 61–65, 100–106, 132–135, Phe139, and Arg142; these read DIG, FPDTD, AQAPKMA, and TTSE.

This sequence belongs to the IspF family. In terms of assembly, homotrimer. The cofactor is a divalent metal cation.

The enzyme catalyses 4-CDP-2-C-methyl-D-erythritol 2-phosphate = 2-C-methyl-D-erythritol 2,4-cyclic diphosphate + CMP. Its pathway is isoprenoid biosynthesis; isopentenyl diphosphate biosynthesis via DXP pathway; isopentenyl diphosphate from 1-deoxy-D-xylulose 5-phosphate: step 4/6. Involved in the biosynthesis of isopentenyl diphosphate (IPP) and dimethylallyl diphosphate (DMAPP), two major building blocks of isoprenoid compounds. Catalyzes the conversion of 4-diphosphocytidyl-2-C-methyl-D-erythritol 2-phosphate (CDP-ME2P) to 2-C-methyl-D-erythritol 2,4-cyclodiphosphate (ME-CPP) with a corresponding release of cytidine 5-monophosphate (CMP). The polypeptide is 2-C-methyl-D-erythritol 2,4-cyclodiphosphate synthase (Aliivibrio salmonicida (strain LFI1238) (Vibrio salmonicida (strain LFI1238))).